Here is a 207-residue protein sequence, read N- to C-terminus: Holliday junction branch migration complex subunit RuvA (207 aa).

The segment at 1-64 (MIGRLTGILA…ETSQQLFGFS (64 aa)) is domain I. Residues 65-142 (SQQDRELFRM…ALDTTPSEHS (78 aa)) form a domain II region. The interval 143-157 (PTGEGAGIVRVDPVI) is flexible linker. The tract at residues 158–207 (NTNVIIADAESALIGLGYKPTEAAKAVSAAYNDTITTSEDLIRAALKGMI) is domain III.

This sequence belongs to the RuvA family. Homotetramer. Forms an RuvA(8)-RuvB(12)-Holliday junction (HJ) complex. HJ DNA is sandwiched between 2 RuvA tetramers; dsDNA enters through RuvA and exits via RuvB. An RuvB hexamer assembles on each DNA strand where it exits the tetramer. Each RuvB hexamer is contacted by two RuvA subunits (via domain III) on 2 adjacent RuvB subunits; this complex drives branch migration. In the full resolvosome a probable DNA-RuvA(4)-RuvB(12)-RuvC(2) complex forms which resolves the HJ.

The protein resides in the cytoplasm. In terms of biological role, the RuvA-RuvB-RuvC complex processes Holliday junction (HJ) DNA during genetic recombination and DNA repair, while the RuvA-RuvB complex plays an important role in the rescue of blocked DNA replication forks via replication fork reversal (RFR). RuvA specifically binds to HJ cruciform DNA, conferring on it an open structure. The RuvB hexamer acts as an ATP-dependent pump, pulling dsDNA into and through the RuvAB complex. HJ branch migration allows RuvC to scan DNA until it finds its consensus sequence, where it cleaves and resolves the cruciform DNA. In Saccharophagus degradans (strain 2-40 / ATCC 43961 / DSM 17024), this protein is Holliday junction branch migration complex subunit RuvA.